Consider the following 922-residue polypeptide: MNMSLSRIVKAAPLRRTTLAMALGALGAAPAAYADWNNQSIIKAGERQHGIHIKQSDGAGVRTATGTTIKVSGRQAQGVLLENPAAELRFQNGSVTSSGQLFDEGVRRFLGTVTVKAGKLVADHATLANVSDTRDDDGIALYVAGEQAQASIADSTLQGAGGVRVERGANVTVQRSTIVDGGLHIGTLQPLQPEDLPPSRVVLGDTSVTAVPASGAPAAVFVFGANELTVDGGHITGGRAAGVAAMDGAIVHLQRATIRRGDAPAGGAVPGGAVPGGAVPGGFGPLLDGWYGVDVSDSTVDLAQSIVEAPQLGAAIRAGRGARVTVSGGSLSAPHGNVIETGGGARRFPPPASPLSITLQAGARAQGRALLYRVLPEPVKLTLAGGAQGQGDIVATELPPIPGASSGPLDVALASQARWTGATRAVDSLSIDNATWVMTDNSNVGALRLASDGSVDFQQPAEAGRFKVLMVDTLAGSGLFRMNVFADLGLSDKLVVMRDASGQHRLWVRNSGSEPASGNTMLLVQTPRGSAATFTLANKDGKVDIGTYRYRLAANGNGQWSLVGAKAPPAPKPAPQPGPQPGPQPPQPPQPPQPPQPPQPPQRQPEAPAPQPPAGRELSAAANAAVNTGGVGLASTLWYAESNALSKRLGELRLNPDAGGAWGRGFAQRQQLDNRAGRRFDQKVAGFELGADHAVAVAGGRWHLGGLAGYTRGDRGFTGDGGGHTDSVHVGGYATYIANSGFYLDATLRASRLENDFKVAGSDGYAVKGKYRTHGVGVSLEAGRRFAHADGWFLEPQAELAVFRVGGGAYRAANGLRVRDEGGSSVLGRLGLEVGKRIELAGGRQVQPYIKASVLQEFDGAGTVRTNGIAHRTELRGTRAELGLGMAAALGRGHSLYASYEYSKGPKLAMPWTFHAGYRYSW.

Positions M1–A34 are cleaved as a signal peptide. The short motif at R260 to D262 is the Cell attachment site; involved in adhesion to various eukaryotic cell lines element. 3 consecutive repeat copies span residues G266–P270, G271–P275, and G276–P280. The 4 X 5 AA tandem repeats of G-G-A-V-P stretch occupies residues G266–W290. The 4; approximate repeat unit spans residues G281 to P285. A disordered region spans residues S561 to S619. A compositionally biased stretch (pro residues) spans P568–P613. The interval P575 to R603 is 9 X 3 AA approximate repeats of P-Q-P. Residues L654–W922 enclose the Autotransporter domain.

In terms of assembly, monomer.

The protein resides in the periplasm. Its subcellular location is the secreted. The protein localises to the cell surface. It is found in the cell outer membrane. Its function is as follows. Agglutinogen that binds to eukaryotic cells; a process mediated by the R-G-D sequence. Pertactin may have a role in bacterial adhesion, and thus play a role in virulence. May contribute to the disease state of whooping cough. This is Pertactin autotransporter (prn) from Bordetella parapertussis (strain 12822 / ATCC BAA-587 / NCTC 13253).